The sequence spans 312 residues: Putative S-adenosyl-L-methionine-dependent methyltransferase Mkms_0097 (312 aa).

Residues aspartate 134 and 163 to 164 contribute to the S-adenosyl-L-methionine site; that span reads DL.

Belongs to the UPF0677 family.

Exhibits S-adenosyl-L-methionine-dependent methyltransferase activity. In Mycobacterium sp. (strain KMS), this protein is Putative S-adenosyl-L-methionine-dependent methyltransferase Mkms_0097.